We begin with the raw amino-acid sequence, 324 residues long: Membrane protein UL8 (324 aa).

The segment at 36 to 138 is immunoglobulin V-like domain; sequence ILESIIYVSG…LWYNLTVKPK (103 aa). The helical transmembrane segment at 278 to 298 threads the bilayer; that stretch reads THYSWMLIIAIILIIFIIICL.

This sequence belongs to the RL11 family. In terms of processing, highly glycosylated.

It localises to the host cell membrane. Functionally, plays a role in the inhibition of pro-inflammatory cytokine production. This effect is mediated by the conserved Ig-like domain. The polypeptide is Membrane protein UL8 (UL8) (Homo sapiens (Human)).